The sequence spans 408 residues: DNA primase DnaG (408 aa).

In terms of domain architecture, Toprim spans 171–250 (DAIIIVEGRA…AYSPRGKSVE (80 aa)). 3 residues coordinate Mg(2+): Glu-177, Asp-219, and Asp-221. Residues 276-323 (AEENVERLPPSAAPAEVRAPAGAGRTSEGERPPRREWDSKPPSTLGEH) form a disordered region. The segment covering 284 to 298 (PPSAAPAEVRAPAGA) has biased composition (low complexity). A compositionally biased stretch (basic and acidic residues) spans 302 to 314 (SEGERPPRREWDS).

The protein belongs to the archaeal DnaG primase family. Forms a ternary complex with MCM helicase and DNA. Mg(2+) serves as cofactor.

It catalyses the reaction ssDNA + n NTP = ssDNA/pppN(pN)n-1 hybrid + (n-1) diphosphate.. Functionally, RNA polymerase that catalyzes the synthesis of short RNA molecules used as primers for DNA polymerase during DNA replication. This Methanoculleus marisnigri (strain ATCC 35101 / DSM 1498 / JR1) protein is DNA primase DnaG.